Here is a 130-residue protein sequence, read N- to C-terminus: Small ribosomal subunit protein uS9 (130 aa).

This sequence belongs to the universal ribosomal protein uS9 family.

In Shewanella denitrificans (strain OS217 / ATCC BAA-1090 / DSM 15013), this protein is Small ribosomal subunit protein uS9.